Consider the following 229-residue polypeptide: ATP synthase subunit a (229 aa).

The next 7 membrane-spanning stretches (helical) occupy residues 25-45 (VHII…VLGA), 58-75 (FLEV…SVTG), 81-101 (FFPL…IGLV), 110-130 (SINT…FIGI), 141-161 (FLGP…IGHL), 175-195 (MMGH…FFAP), and 196-216 (LPIM…FFLL).

The protein belongs to the ATPase A chain family. In terms of assembly, F-type ATPases have 2 components, CF(1) - the catalytic core - and CF(0) - the membrane proton channel. CF(1) has five subunits: alpha(3), beta(3), gamma(1), delta(1), epsilon(1). CF(0) has three main subunits: a(1), b(2) and c(9-12). The alpha and beta chains form an alternating ring which encloses part of the gamma chain. CF(1) is attached to CF(0) by a central stalk formed by the gamma and epsilon chains, while a peripheral stalk is formed by the delta and b chains.

It localises to the cell inner membrane. Key component of the proton channel; it plays a direct role in the translocation of protons across the membrane. In Desulfosudis oleivorans (strain DSM 6200 / JCM 39069 / Hxd3) (Desulfococcus oleovorans), this protein is ATP synthase subunit a.